The primary structure comprises 263 residues: N-glycosylase/DNA lyase (263 aa).

Residues glutamine 43, serine 71, and tryptophan 82 each coordinate 8-oxoguanine. The segment at 139 to 204 (RRYYFENMMG…EDVRIKAYTE (66 aa)) is helix-hairpin-helix. Lysine 164 (schiff-base intermediate with DNA) is an active-site residue. 2 residues coordinate 8-oxoguanine: phenylalanine 168 and proline 194. Residue aspartate 196 is part of the active site. Residues aspartate 230 and tryptophan 234 each coordinate 8-oxoguanine.

Belongs to the archaeal N-glycosylase/DNA lyase (AGOG) family.

The enzyme catalyses 2'-deoxyribonucleotide-(2'-deoxyribose 5'-phosphate)-2'-deoxyribonucleotide-DNA = a 3'-end 2'-deoxyribonucleotide-(2,3-dehydro-2,3-deoxyribose 5'-phosphate)-DNA + a 5'-end 5'-phospho-2'-deoxyribonucleoside-DNA + H(+). Its function is as follows. DNA repair enzyme that is part of the base excision repair (BER) pathway; protects from oxidative damage by removing the major product of DNA oxidation, 8-oxoguanine (GO), from single- and double-stranded DNA substrates. The protein is N-glycosylase/DNA lyase of Thermococcus kodakarensis (strain ATCC BAA-918 / JCM 12380 / KOD1) (Pyrococcus kodakaraensis (strain KOD1)).